A 230-amino-acid chain; its full sequence is Poxin (230 aa).

Catalysis depends on H43, which acts as the Proton donor. The Shared with catalytic histidine of dimeric partner role is filled by Y174. K178 acts as the Proton acceptor; shared with catalytic histidine of dimeric partner in catalysis.

The protein belongs to the poxin family. As to quaternary structure, homodimer.

It carries out the reaction 2',3'-cGAMP + H2O = Gp(2'-5')Ap(3') + H(+). In terms of biological role, nuclease that cleaves host 2',3'-cGAMP. The protein is Poxin (P26) of Orgyia pseudotsugata multicapsid polyhedrosis virus (OpMNPV).